The primary structure comprises 391 residues: Solute carrier family 35 member F2 (391 aa).

10 helical membrane passes run Met-39–Thr-59, Leu-73–Val-93, Trp-108–Ala-128, Ile-137–Leu-157, Phe-165–Met-185, Leu-200–Gln-220, Val-230–Ile-250, Leu-267–Ile-287, Ala-294–Phe-314, and Phe-318–Ser-338. The segment at Val-361 to Ala-391 is disordered. Positions Ser-365–Gln-380 are enriched in polar residues.

It belongs to the SLC35F solute transporter family.

It is found in the membrane. Putative solute transporter. The protein is Solute carrier family 35 member F2 (slc35f2) of Xenopus tropicalis (Western clawed frog).